Here is a 75-residue protein sequence, read N- to C-terminus: CDC42 small effector protein 2-C (75 aa).

2 S-palmitoyl cysteine lipidation sites follow: Cys-10 and Cys-11. Residues Ile-29 to Gly-42 form the CRIB domain.

The protein belongs to the CDC42SE/SPEC family.

It is found in the cytoplasm. Its subcellular location is the cytoskeleton. The protein resides in the cell membrane. Its function is as follows. Probably involved in the organization of the actin cytoskeleton by acting downstream of CDC42, inducing actin filament assembly. This Xenopus laevis (African clawed frog) protein is CDC42 small effector protein 2-C (cdc42se2-c).